The chain runs to 529 residues: GTPase Obg (529 aa).

In terms of domain architecture, Obg spans 2–159; the sequence is ASFVDRVVLH…SDIVLELKSI (158 aa). Positions 160-343 constitute an OBG-type G domain; it reads ADIALVGFPS…LGFAMAEIVK (184 aa). Residues 166 to 173, 191 to 195, 212 to 215, 295 to 298, and 324 to 326 each bind GTP; these read GFPSAGKS, FTTLI, DVPG, NKVD, and SAT. Serine 173 and threonine 193 together coordinate Mg(2+). The OCT domain maps to 363–447; that stretch reads PRAVNEAGFK…DDGVVFDWEP (85 aa). Residues 466 to 502 are compositionally biased toward basic and acidic residues; that stretch reads FADIGDRPTRGQKRDEQQERRDAKAAARAELEAERKA. The interval 466–529 is disordered; the sequence is FADIGDRPTR…ESGLTTENEE (64 aa).

Belongs to the TRAFAC class OBG-HflX-like GTPase superfamily. OBG GTPase family. In terms of assembly, monomer. Mg(2+) serves as cofactor.

It is found in the cytoplasm. Its function is as follows. An essential GTPase which binds GTP, GDP and possibly (p)ppGpp with moderate affinity, with high nucleotide exchange rates and a fairly low GTP hydrolysis rate. Plays a role in control of the cell cycle, stress response, ribosome biogenesis and in those bacteria that undergo differentiation, in morphogenesis control. In Arthrobacter sp. (strain FB24), this protein is GTPase Obg.